The primary structure comprises 273 residues: uncharacterized protein (273 aa).

Positions 1 to 10 (MSSKKVKYNP) are enriched in basic residues. Disordered regions lie at residues 1–32 (MSSKKVKYNPRKSASQNEATSASAGSKAFGFN) and 50–124 (EDVE…QSSP). 3 stretches are compositionally biased toward polar residues: residues 12–24 (KSASQNEATSASA), 55–64 (QSFNGKSSNL), and 92–124 (PQSSSQKPFASSTYNVELPTSPTKITNIGQSSP). Residue S123 is modified to Phosphoserine.

It localises to the nucleus. It is found in the cytoplasm. Its subcellular location is the cytoskeleton. The protein resides in the spindle. This is an uncharacterized protein from Schizosaccharomyces pombe (strain 972 / ATCC 24843) (Fission yeast).